The sequence spans 251 residues: Mlc titration factor A (251 aa).

Zn(2+) contacts are provided by histidine 111, histidine 148, histidine 152, and glutamate 211.

It belongs to the MtfA family. As to quaternary structure, interacts with Mlc. Requires Zn(2+) as cofactor.

Its subcellular location is the cytoplasm. Involved in the modulation of the activity of the glucose-phosphotransferase system (glucose-PTS). Interacts with the transcriptional repressor Mlc, preventing its interaction with DNA and leading to the modulation of expression of genes regulated by Mlc, including ptsG, which encodes the PTS system glucose-specific EIICB component. Its function is as follows. Shows zinc-dependent metallopeptidase activity. This is Mlc titration factor A from Salmonella arizonae (strain ATCC BAA-731 / CDC346-86 / RSK2980).